Consider the following 270-residue polypeptide: Tetraspanin-14 (270 aa).

The Cytoplasmic portion of the chain corresponds to 1 to 17 (MHYYRYSNAEVSCWYKY). A helical membrane pass occupies residues 18-38 (LLFSYNIVFWLAGVVFLGVGL). Over 39–61 (WAWSEKGVLSDLTKVTRLHGIDP) the chain is Extracellular. Residues 62–82 (VVLVLMVGVVMFTLGFAGCVG) traverse the membrane as a helical segment. At 83 to 92 (ALRENICLLK) the chain is on the cytoplasmic side. A helical membrane pass occupies residues 93–113 (FFCGAIVLIFFLELAVAVLAF). Residues 114–232 (LFQDWVRDRF…QALEGWLPRN (119 aa)) are Extracellular-facing. Residues 114-232 (LFQDWVRDRF…QALEGWLPRN (119 aa)) are necessary and sufficient for interaction with ADAM10. 4 disulfide bridges follow: C153–C221, C154–C186, C170–C180, and C187–C200. Residue N169 is glycosylated (N-linked (GlcNAc...) asparagine). Residues 233–253 (IYIVAGVFIAISLLQIFGIFL) traverse the membrane as a helical segment. Residues 254-270 (ARTLISDIEAVKAGHHF) are Cytoplasmic-facing.

The protein belongs to the tetraspanin (TM4SF) family. As to quaternary structure, interacts with ADAM10; the interaction promotes ADAM10 maturation and cell surface expression.

The protein localises to the cell membrane. Functionally, part of TspanC8 subgroup, composed of 6 members that interact with the transmembrane metalloprotease ADAM10. This interaction is required for ADAM10 exit from the endoplasmic reticulum and for enzymatic maturation and trafficking to the cell surface as well as substrate specificity. Different TspanC8/ADAM10 complexes have distinct substrates. Negatively regulates ADAM10-mediated cleavage of GP6. Promotes ADAM10-mediated cleavage of CDH5. In Mus musculus (Mouse), this protein is Tetraspanin-14 (Tspan14).